The chain runs to 445 residues: Signal recognition particle 54 kDa protein (445 aa).

GTP is bound by residues 106 to 113, 186 to 190, and 244 to 247; these read GLQGSGKT, DTAGR, and TKLD.

It belongs to the GTP-binding SRP family. SRP54 subfamily. Part of the signal recognition particle protein translocation system, which is composed of SRP and FtsY. Archaeal SRP consists of a 7S RNA molecule of 300 nucleotides and two protein subunits: SRP54 and SRP19.

The protein localises to the cytoplasm. It catalyses the reaction GTP + H2O = GDP + phosphate + H(+). Involved in targeting and insertion of nascent membrane proteins into the cytoplasmic membrane. Binds to the hydrophobic signal sequence of the ribosome-nascent chain (RNC) as it emerges from the ribosomes. The SRP-RNC complex is then targeted to the cytoplasmic membrane where it interacts with the SRP receptor FtsY. The protein is Signal recognition particle 54 kDa protein of Methanobrevibacter smithii (strain ATCC 35061 / DSM 861 / OCM 144 / PS).